The sequence spans 188 residues: Ribosome-recycling factor (188 aa).

Belongs to the RRF family.

It localises to the cytoplasm. In terms of biological role, responsible for the release of ribosomes from messenger RNA at the termination of protein biosynthesis. May increase the efficiency of translation by recycling ribosomes from one round of translation to another. The chain is Ribosome-recycling factor from Granulibacter bethesdensis (strain ATCC BAA-1260 / CGDNIH1).